The sequence spans 75 residues: Iota-conotoxin-like R11.3 (75 aa).

The N-terminal stretch at 1 to 19 (MKLCLTFLLVLMILASVTG) is a signal peptide. The propeptide occupies 20–34 (EKLSEQTLRRAARKN). Disulfide bonds link C39/C53, C46/C58, C52/C63, and C57/C70.

The protein belongs to the conotoxin I1 superfamily. As to expression, expressed by the venom duct.

It is found in the secreted. Functionally, iota-conotoxins bind to voltage-gated sodium channels (Nav) and act as agonists by shifting the voltage-dependence of activation to more hyperpolarized levels. Produces general excitatory symptoms. In Conus radiatus (Rayed cone), this protein is Iota-conotoxin-like R11.3.